The chain runs to 351 residues: Selenide, water dikinase (351 aa).

Sec-15 is an active-site residue. Position 15 (Sec-15) is a non-standard amino acid, selenocysteine. ATP is bound by residues Lys-18 and 47–49 (DNE). A Mg(2+)-binding site is contributed by Asp-50. Residues Asp-67, Asp-90, and 138-140 (GHS) each bind ATP. Asp-90 contributes to the Mg(2+) binding site. Asp-227 serves as a coordination point for Mg(2+).

It belongs to the selenophosphate synthase 1 family. Class I subfamily. In terms of assembly, homodimer. Requires Mg(2+) as cofactor.

It carries out the reaction hydrogenselenide + ATP + H2O = selenophosphate + AMP + phosphate + 2 H(+). Its function is as follows. Synthesizes selenophosphate from selenide and ATP. The sequence is that of Selenide, water dikinase from Nitratidesulfovibrio vulgaris (strain ATCC 29579 / DSM 644 / CCUG 34227 / NCIMB 8303 / VKM B-1760 / Hildenborough) (Desulfovibrio vulgaris).